The following is a 263-amino-acid chain: Large ribosomal subunit protein uL29m (263 aa).

Disordered regions lie at residues 51-92 and 208-263; these read ARVT…EELP and PEID…APRV. Positions 53–66 are enriched in basic and acidic residues; sequence VTRDNSKQRGESAL. Over residues 214–223 the composition is skewed to polar residues; sequence NPENPYTPST. Over residues 233 to 245 the composition is skewed to low complexity; the sequence is GAEASETQSTTTE. Over residues 246-257 the composition is skewed to polar residues; the sequence is IDPTTIPSSKSQ.

This sequence belongs to the universal ribosomal protein uL29 family. Component of the mitochondrial large ribosomal subunit (mt-LSU). Mature N.crassa 74S mitochondrial ribosomes consist of a small (37S) and a large (54S) subunit. The 37S small subunit contains a 16S ribosomal RNA (16S mt-rRNA) and 32 different proteins. The 54S large subunit contains a 23S rRNA (23S mt-rRNA) and 42 different proteins.

It is found in the mitochondrion. In terms of biological role, component of the mitochondrial ribosome (mitoribosome), a dedicated translation machinery responsible for the synthesis of mitochondrial genome-encoded proteins, including at least some of the essential transmembrane subunits of the mitochondrial respiratory chain. The mitoribosomes are attached to the mitochondrial inner membrane and translation products are cotranslationally integrated into the membrane. The polypeptide is Large ribosomal subunit protein uL29m (mrpl4) (Neurospora crassa (strain ATCC 24698 / 74-OR23-1A / CBS 708.71 / DSM 1257 / FGSC 987)).